A 5084-amino-acid chain; its full sequence is Apicidin F synthase (5084 aa).

The segment at 209-606 (ARILQRQPDK…VGRLDSQVKL (398 aa)) is adenylation 1. The region spanning 731 to 808 (HETDNCQRLL…EAASSMREVV (78 aa)) is the Carrier 1 domain. Residue Ser768 is modified to O-(pantetheine 4'-phosphoryl)serine. Condensation stretches follow at residues 822–1124 (YPLS…FPIY) and 1309–1609 (EIYC…SILV). An adenylation 2 region spans residues 1788–2192 (EDPTREAVFS…IGRKDNQIKI (405 aa)). A Carrier 2 domain is found at 2341 to 2415 (VVKDDPVSEL…DMAKGMAPLS (75 aa)). O-(pantetheine 4'-phosphoryl)serine is present on Ser2376. The segment at 2415 to 2441 (SLTAPESTSSSSPQSFSTSTSTTIIEN) is disordered. Positions 2421-2437 (STSSSSPQSFSTSTSTT) are enriched in low complexity. The interval 2478–2755 (EDIFPCTPMQ…IVTLPRQLNI (278 aa)) is condensation 3. Residues 2935–3328 (RNNPRARAVV…GRRDGQIKLR (394 aa)) are adenylation 3. Residues 3463-3539 (ETWSSSEAIV…DMASRLSRPE (77 aa)) form the Carrier 3 domain. Ser3500 is subject to O-(pantetheine 4'-phosphoryl)serine. The tract at residues 3581-3866 (EDIYPCTPLQ…IATVPSRTTI (286 aa)) is condensation 4. The tract at residues 4029-4426 (RKQVELSPSH…TVSWIGRKDH (398 aa)) is adenylation 4. Positions 4554–4631 (ALKTPKERLL…DMADLLGPLR (78 aa)) constitute a Carrier 4 domain. Ser4592 is subject to O-(pantetheine 4'-phosphoryl)serine. The interval 4669-4948 (EQIYPCTAYQ…ISKLPLRIQL (280 aa)) is condensation 5.

This sequence belongs to the NRP synthetase family.

It participates in secondary metabolite biosynthesis. Its function is as follows. Non-ribosomal peptide synthetase; part of the gene cluster that mediates the biosynthesis of the cyclic tetrapeptide apicidin F (APF). The non-ribosomal peptide synthetase apf1 incorporates four different amino acids to produce apicidin F: L-phenylalanine, D-pipecolic acid (D-pip), N-methoxy-L-tryptophan and L-2-aminooctanedioic acid. L-Phenylalanine is the only proteinogenic amino acid directly used by apf1. The 3 other apf1 substrates are non-proteinogenic and have to be modified by other enzymes of the cluster. Lysine is converted to delta-1-pyrroline-5-carboxylate (P5C) which is reduced to L-pipecolic acid (L-pip) by apf3. L-pip is epimerized to D-pip, probably by apf1 activity, prior to incorporation. L-Tryptophan is N-oxidyzed by one of the cytochrome P450 monooxygenases (apf7 or apf8), and further methylated at the hydroxy group by the O-methyltransferase apf6 to yield N-methoxy-L-tryptophan. The synthesis of the fourth apf1 substrate is more complex. The fatty acid synthase apf5 is involved in the synthesis of the octanoic acid backbone of L-2-aminooctanedioic acid by fixing one acetyl-CoA unit and three malonyl-CoA units. Then one of the cytochrome P450 monooxygenases (apf7 or apf8) may oxidize this backbone to 2-oxooctanoic acid. The aminotransferase apf4 is predicted to catalyze the exchange of the keto group with an amino group. The next step would be the oxidation of 2-aminooctanoic acid by one of the cytochrome P450 monooxygenases (apf7 or apf8). The last step is the oxidation of 2-amino-8-hydroxyoctanoic acid to 2-aminooctanedioic acid is catalyzed by the FAD-dependent monooxygenase apf9. The sequence is that of Apicidin F synthase from Gibberella fujikuroi (strain CBS 195.34 / IMI 58289 / NRRL A-6831) (Bakanae and foot rot disease fungus).